Reading from the N-terminus, the 95-residue chain is Enhancer of yellow 2b transcription factor (95 aa).

It belongs to the ENY2 family. As to expression, expressed specifically in testis.

Functionally, testis-specific paralog of the ubiquitously expressed transcription and mRNA export factor e(y)2. Cannot functionally replace e(y)2. This chain is Enhancer of yellow 2b transcription factor (e(y)2b), found in Drosophila melanogaster (Fruit fly).